The primary structure comprises 243 residues: Voltage-gated monoatomic cation channel TMEM109 (243 aa).

The first 33 residues, 1-33 (MAGSGSSAPWGKHLLHAVLMVLVALVLLHSALA), serve as a signal peptide directing secretion. Residues 34-83 (QSHRDFAPPGQQRREAPVDLLTQIGRSVRETLDTWIGPETMHLISETLSQ) lie on the Lumenal side of the membrane. Residues 84-104 (VMWAISSAISVAFFALSGIAA) traverse the membrane as a helical segment. Topologically, residues 105–135 (QLLTALGLDGDHLTQGLKLSPSQVQTFLLWG) are cytoplasmic. Residues 136 to 156 (AGALVVYWLLSLLLGLVLAVL) traverse the membrane as a helical segment. Over 157 to 185 (GRILGGLKLVIFLAGFVALVRSVPDPSTR) the chain is Lumenal. A helical membrane pass occupies residues 186 to 205 (ALLLLALLTLYALLSRLTGS). Topologically, residues 206 to 243 (RASGAQLEAKVRGLERQVDELRWRQRRAAKGARSVEEE) are cytoplasmic.

As to quaternary structure, homooligomer. Interacts with CRYAB; in the cellular response to DNA damage. The N-terminus is blocked. As to expression, widely expressed. Expressed in skeletal, cardiac and smooth muscle cells, in brain, including neuroglial cells, cerebral cortex neurons and cerebellum, but not Purkinje cells. Also detected in Paneth and Goblet cells of the small intestine (but not in the epithelium), duodenal gland, pancreas, parotid gland, testis, thyroid gland and adrenal gland, as well as in epidermis, choroid plexus, ductus epididymidis, lymphocytes, fibroblasts, endothelial cells and seminiferous epithelial cells (at protein level). Not detected in mucous cells of the duodenal gland, in hepatocytes nor in uriniferous tubules.

It is found in the nucleus outer membrane. The protein localises to the endoplasmic reticulum membrane. It localises to the sarcoplasmic reticulum membrane. It carries out the reaction K(+)(in) = K(+)(out). It catalyses the reaction Ca(2+)(in) = Ca(2+)(out). In terms of biological role, functions as a voltage-gated monoatomic cation channel permeable to both potassium and calcium. Plays a role in the cellular response to DNA damage. The polypeptide is Voltage-gated monoatomic cation channel TMEM109 (Oryctolagus cuniculus (Rabbit)).